A 603-amino-acid polypeptide reads, in one-letter code: O-acetyltransferase OatA (603 aa).

Transmembrane regions (helical) follow at residues 17–37 (YLPG…IYHL), 45–65 (GFLG…SLLI), 87–107 (LIPA…IFKP), 148–168 (LWSL…ITFL), 177–197 (IIQT…VIHF), 211–231 (TRLQ…PFAL), 239–259 (IVVS…TLFF), 268–288 (IYNG…AIAV), 311–331 (YSLY…YVQG), 333–353 (IPVY…EISY), and 382–402 (VLVI…FDAL). Residues serine 453, aspartate 575, and histidine 578 contribute to the active site.

The protein belongs to the acyltransferase 3 family. Monomer.

The protein resides in the cell membrane. In terms of biological role, responsible for O-acetylation at the C(6)-hydroxyl group of N-acetylmuramyl residues, forming the corresponding N,6-O-diacetylmuramic acid of the peptidoglycan. O-acetylation of the peptidoglycan is the major determinant for lysozyme resistance. This Staphylococcus aureus (strain NCTC 8325 / PS 47) protein is O-acetyltransferase OatA.